Consider the following 247-residue polypeptide: Type III pantothenate kinase (247 aa).

6-13 (DVGNTSIY) contacts ATP. A substrate-binding site is contributed by 102-105 (GADL). Asp-104 serves as the catalytic Proton acceptor. Asp-122 serves as a coordination point for K(+). Thr-125 contributes to the ATP binding site. A substrate-binding site is contributed by Thr-176.

It belongs to the type III pantothenate kinase family. In terms of assembly, homodimer. The cofactor is NH4(+). Requires K(+) as cofactor.

It is found in the cytoplasm. The catalysed reaction is (R)-pantothenate + ATP = (R)-4'-phosphopantothenate + ADP + H(+). The protein operates within cofactor biosynthesis; coenzyme A biosynthesis; CoA from (R)-pantothenate: step 1/5. Its function is as follows. Catalyzes the phosphorylation of pantothenate (Pan), the first step in CoA biosynthesis. The chain is Type III pantothenate kinase from Acholeplasma laidlawii (strain PG-8A).